The chain runs to 741 residues: Transketolase, chloroplastic (741 aa).

The transit peptide at 1 to 67 (MASSSSLTLS…TKQQFSVRAS (67 aa)) directs the protein to the chloroplast. A substrate-binding site is contributed by histidine 103. Thiamine diphosphate contacts are provided by residues histidine 143 and 192–194 (GPL). Aspartate 233 is a binding site for Mg(2+). Thiamine diphosphate is bound by residues glycine 234 and asparagine 263. Residues asparagine 263 and isoleucine 265 each coordinate Mg(2+). Residues histidine 340, arginine 434, and serine 461 each contribute to the substrate site. Histidine 340 is a binding site for thiamine diphosphate. Residues glutamate 488 and phenylalanine 515 each coordinate thiamine diphosphate. Glutamate 488 serves as the catalytic Proton donor. Substrate contacts are provided by histidine 539, aspartate 547, and arginine 598.

It belongs to the transketolase family. Homodimer. It depends on Mg(2+) as a cofactor. Ca(2+) serves as cofactor. The cofactor is Mn(2+). Requires Co(2+) as cofactor. Thiamine diphosphate is required as a cofactor.

The protein resides in the plastid. The protein localises to the chloroplast thylakoid membrane. It carries out the reaction D-sedoheptulose 7-phosphate + D-glyceraldehyde 3-phosphate = aldehydo-D-ribose 5-phosphate + D-xylulose 5-phosphate. The protein operates within carbohydrate biosynthesis; Calvin cycle. In terms of biological role, catalyzes the reversible transfer of a two-carbon ketol group from fructose-6-phosphate or sedoheptulose-7-phosphate to glyceraldehyde-3-phosphate to yield xylulose-5-phosphate and erythrose-4-phosphate or ribose-5-phosphate, respectively. The polypeptide is Transketolase, chloroplastic (Solanum tuberosum (Potato)).